Here is a 439-residue protein sequence, read N- to C-terminus: tRNA-2-methylthio-N(6)-dimethylallyladenosine synthase (439 aa).

Residues 2–119 (KYIYIKTWGC…LPKMIDEVEK (118 aa)) form the MTTase N-terminal domain. C11, C48, C82, C156, C160, and C163 together coordinate [4Fe-4S] cluster. Positions 142–374 (KKKGYTADIS…QERINIQTML (233 aa)) constitute a Radical SAM core domain. A TRAM domain is found at 377 to 439 (RKMFGSIQSV…HTHSLKGELF (63 aa)).

This sequence belongs to the methylthiotransferase family. MiaB subfamily. In terms of assembly, monomer. Requires [4Fe-4S] cluster as cofactor.

It localises to the cytoplasm. It catalyses the reaction N(6)-dimethylallyladenosine(37) in tRNA + (sulfur carrier)-SH + AH2 + 2 S-adenosyl-L-methionine = 2-methylsulfanyl-N(6)-dimethylallyladenosine(37) in tRNA + (sulfur carrier)-H + 5'-deoxyadenosine + L-methionine + A + S-adenosyl-L-homocysteine + 2 H(+). In terms of biological role, catalyzes the methylthiolation of N6-(dimethylallyl)adenosine (i(6)A), leading to the formation of 2-methylthio-N6-(dimethylallyl)adenosine (ms(2)i(6)A) at position 37 in tRNAs that read codons beginning with uridine. The sequence is that of tRNA-2-methylthio-N(6)-dimethylallyladenosine synthase from Buchnera aphidicola subsp. Acyrthosiphon pisum (strain APS) (Acyrthosiphon pisum symbiotic bacterium).